We begin with the raw amino-acid sequence, 451 residues long: Spermidine sinapoyl-CoA acyltransferase (451 aa).

Spermidine is bound by residues Tyr-47, His-169, Ser-294, Asp-316, and Leu-378. The active-site Proton acceptor is His-169. Asp-391 (proton acceptor) is an active-site residue.

Belongs to the plant acyltransferase family. In terms of assembly, monomer. In terms of tissue distribution, predominantly expressed in siliques, especially in seeds around the embryo, and, at low levels, in flowers. Barely detectable in stems, leaves, and roots.

It catalyses the reaction 2 (E)-sinapoyl-CoA + spermidine = N(1),N(8)-bis[(E)-sinapoyl]-spermidine + 2 CoA + 2 H(+). It participates in amine and polyamine metabolism; spermidine metabolism. Spermidine sinapoyl-CoA acyltransferase that mediates the accumulation of disinapoyl spermidine conjugates in seeds. Catalyzes the two conjugating steps required for the biosynthesis of N1,N8-disipanoyl-spermidine. Can also use putrescine as an acyl acceptor to convert it into monosinapoyl-putrescine. In Arabidopsis thaliana (Mouse-ear cress), this protein is Spermidine sinapoyl-CoA acyltransferase.